The sequence spans 428 residues: MSFDINWNQLTIDDTINQSIKEFLDQQFKNISLPSFISNLAVTDFNLGEIPPEVTIRHIGDPFEEFYEDENNLGVMNEANNDSKDEHLKNHGDGINKDSGYNSQNLDDEDEDDEDDDEDDEDEEEEDEDDYDDHDLGTINEGISLLNFNENSTTPSANSFAGSAAPPLPPPLNPSRDSFHSILHPYGVNSIIGATGAGSETPTNILNQNYLSSRVLPKISVKQKQPHHDDNDIQLIVEINYKGDMHINLLVNLLVNYPSPNFISLPIKLHITDIVIHSIATIAYLKKSVFLSFLCDVDDTFPDFDSNVQTPTSTTGGNFVDYYSNDATINKERIDIVKKIKIESEIGEVENNILRNVGKVEKFLVEQLRNILRDEIAWPSWICIDMNDDDDEEEEEEESEDNDGGNSDLNDNDGKHGDGRTDETEAGE.

The region spanning 1-387 is the SMP-LTD domain; it reads MSFDINWNQL…WPSWICIDMN (387 aa). Disordered stretches follow at residues 75–168 and 387–428; these read VMNE…APPL and NDDD…EAGE. The span at 81–96 shows a compositional bias: basic and acidic residues; the sequence is NDSKDEHLKNHGDGIN. A compositionally biased stretch (acidic residues) spans 106–133; it reads LDDEDEDDEDDDEDDEDEEEEDEDDYDD. The segment covering 146–161 has biased composition (polar residues); sequence LNFNENSTTPSANSFA. Over residues 387 to 403 the composition is skewed to acidic residues; sequence NDDDDEEEEEEESEDND. The span at 412-428 shows a compositional bias: basic and acidic residues; sequence NDGKHGDGRTDETEAGE.

The protein belongs to the MDM12 family. In terms of assembly, component of the ER-mitochondria encounter structure (ERMES) or MDM complex, composed of MMM1, MDM10, MDM12 and MDM34. An MMM1 homodimer associates with one molecule of MDM12 on each side in a pairwise head-to-tail manner, and the SMP-LTD domains of MMM1 and MDM12 generate a continuous hydrophobic tunnel for phospholipid trafficking.

The protein localises to the mitochondrion outer membrane. It is found in the endoplasmic reticulum membrane. Functionally, component of the ERMES/MDM complex, which serves as a molecular tether to connect the endoplasmic reticulum (ER) and mitochondria. Components of this complex are involved in the control of mitochondrial shape and protein biogenesis, and function in nonvesicular lipid trafficking between the ER and mitochondria. MDM12 is required for the interaction of the ER-resident membrane protein MMM1 and the outer mitochondrial membrane-resident beta-barrel protein MDM10. The MDM12-MMM1 subcomplex functions in the major beta-barrel assembly pathway that is responsible for biogenesis of all mitochondrial outer membrane beta-barrel proteins, and acts in a late step after the SAM complex. The MDM10-MDM12-MMM1 subcomplex further acts in the TOM40-specific pathway after the action of the MDM12-MMM1 complex. Essential for establishing and maintaining the structure of mitochondria and maintenance of mtDNA nucleoids. This is Mitochondrial distribution and morphology protein 12 from Candida albicans (strain SC5314 / ATCC MYA-2876) (Yeast).